The primary structure comprises 709 residues: Catalase HPII (709 aa).

The segment covering 1-26 has biased composition (polar residues); sequence MSEQNNEQRSQAAGTDTVDRGNSNAK. The segment at 1 to 32 is disordered; sequence MSEQNNEQRSQAAGTDTVDRGNSNAKLEQLEA. Active-site residues include His90 and Asn163. A heme-binding site is contributed by Tyr377. Positions 419–443 are disordered; that stretch reads RASYEPNSIDGGWPKETPPAARNGG.

The protein belongs to the catalase family. HPII subfamily. It depends on heme as a cofactor.

It localises to the cytoplasm. It catalyses the reaction 2 H2O2 = O2 + 2 H2O. Its function is as follows. Decomposes hydrogen peroxide into water and oxygen; serves to protect cells from the toxic effects of hydrogen peroxide. This chain is Catalase HPII (katE), found in Pseudomonas aeruginosa (strain ATCC 15692 / DSM 22644 / CIP 104116 / JCM 14847 / LMG 12228 / 1C / PRS 101 / PAO1).